Consider the following 262-residue polypeptide: MTKIPPGEPDELFDAADERGFFPEKRTRNSPATAPAPATDTHYHGHRDRLRARYREHGDAALADYEILELILFRLIPRRDTKPIAKALLDRFGTLAAVFGAPLHLLQEVKGVGESVALDLKLVATASHRMLRSELRNKQVLSSWSAVIDYCHAAMAHETKEQFRILFLDKRNTLIADEVQQQGTIDHTPVYPREVVKRALELSATALILVHNHPSGDPTPSRADIDMTKLIAEAAKPLGIALHDHVIIGKDGHVSLKGLRLF.

A disordered region spans residues 23–44 (PEKRTRNSPATAPAPATDTHYH). Over residues 31–40 (PATAPAPATD) the composition is skewed to low complexity. The region spanning 140 to 262 (VLSSWSAVID…HVSLKGLRLF (123 aa)) is the MPN domain. Zn(2+) contacts are provided by His-211, His-213, and Asp-224. The short motif at 211–224 (HNHPSGDPTPSRAD) is the JAMM motif element.

It belongs to the UPF0758 family.

The chain is UPF0758 protein R01728 from Rhizobium meliloti (strain 1021) (Ensifer meliloti).